Consider the following 243-residue polypeptide: Terpene cyclase dpmaB (243 aa).

6 helical membrane-spanning segments follow: residues 11 to 31 (PGYL…GLGW), 51 to 71 (ALMP…IYPF), 112 to 132 (LPFI…ALAL), 141 to 161 (AFSA…QLLS), 169 to 189 (SYFL…QDVL), and 207 to 227 (IWFV…LWYV).

It belongs to the paxB family.

It localises to the membrane. Its pathway is secondary metabolite biosynthesis; terpenoid biosynthesis. Terpene cyclase; part of the gene cluster that mediates the biosynthesis of the diterpenoid pyrones subglutinols A and B. The first step of the pathway is the synthesis of the alpha-pyrone moiety by the polyketide synthase dpmaA via condensation of one acetyl-CoA starter unit with 3 malonyl-CoA units and 2 methylations. The alpha-pyrone is then combined with geranylgeranyl pyrophosphate (GGPP) formed by the GGPP synthase dpmaD through the action of the prenyltransferase dpmaC to yield a linear alpha-pyrone diterpenoid. Subsequent steps in the diterpenoid pyrone biosynthetic pathway involve the decalin core formation, which is initiated by the epoxidation of the C10-C11 olefin by the FAD-dependent oxidoreductase dpmaE, and is followed by a cyclization cascade catalyzed by the terpene cyclase dpmaB. The dehydrogenase dpmaF is then involved in tetrahydrofuran (THF) ring formation at the C5 unit to complete the formation of subglutinols A and B. This is Terpene cyclase dpmaB from Metarhizium anisopliae (Entomophthora anisopliae).